A 241-amino-acid chain; its full sequence is MSMLFYTLITAFLIGTQAEPHSESNVPAGHTIPQAHWTKLQHSLDTALRRARSAPAAAIAARVAGQTRNITVDPRLFKKRRLRSPRVLFSTQPPPEAADTQDLDFEVGGAAPFNRTHRSKRSSSHPIFHRGEFSVCDSVSVWVGDKTTATDIKGKEVMVLGEVNINNSVFKQYFFETKCRDPNPVDSGCRGIDSKHWNSYCTTTHTFVKALTMDGKQAAWRFIRIDTACVCVLSRKAVRRA.

Positions Met-1–Ala-18 are cleaved as a signal peptide. Positions Glu-19–Arg-121 are excised as a propeptide. Asn-69, Asn-114, and Asn-166 each carry an N-linked (GlcNAc...) asparagine glycan. Cystine bridges form between Cys-136–Cys-201, Cys-179–Cys-229, and Cys-189–Cys-231. 2 residues coordinate a 1-acyl-sn-glycero-3-phospho-(1D-myo-inositol): Tyr-173 and Lys-209. Position 209 (Lys-209) interacts with a 1-acyl-sn-glycero-3-phospho-L-serine.

The protein belongs to the NGF-beta family. As to quaternary structure, homodimer. The homodimer interacts with a single NTRK1 chain. The homodimer interacts with a single NGFR chain. The NGF dimer interacts with a single SORCS2 chain (via extracellular domain). The NGF precursor (proNGF) binds to a receptor complex formed by SORT1 and NGFR, which leads to NGF endocytosis. Both mature NGF and the immature NGF precursor (proNGF) interact with SORCS2 and with the heterodimer formed by SORCS2 and NGFR (via extracellular domains). The NGF precursor (proNGF) has much higher affinity for SORCS2 than mature NGF. The NGF precursor (proNGF) has much higher affinity for SORT1 than mature NGF. Interacts with ADAM10 in a divalent cation-dependent manner. Interacts with SORCS3.

The protein localises to the secreted. Its subcellular location is the endosome lumen. Nerve growth factor is important for the development and maintenance of the sympathetic and sensory nervous systems. Extracellular ligand for the NTRK1 and NGFR receptors, activates cellular signaling cascades to regulate neuronal proliferation, differentiation and survival. The immature NGF precursor (proNGF) functions as a ligand for the heterodimeric receptor formed by SORCS2 and NGFR, and activates cellular signaling cascades that lead to inactivation of RAC1 and/or RAC2, reorganization of the actin cytoskeleton and neuronal growth cone collapse. In contrast to mature NGF, the precursor form (proNGF) promotes neuronal apoptosis (in vitro). Inhibits metalloproteinase-dependent proteolysis of platelet glycoprotein VI. Binds lysophosphatidylinositol and lysophosphatidylserine between the two chains of the homodimer. The lipid-bound form promotes histamine relase from mast cells, contrary to the lipid-free form. The sequence is that of Beta-nerve growth factor (NGF) from Pan troglodytes (Chimpanzee).